Reading from the N-terminus, the 255-residue chain is MAVGKNKRLSKGKKGLKKRTQDPFSRKDEYSVKAPSTFAIRDVGKTLVNRTTGLKNANDALKGRIFEVSLADLQNDEDHAFRKVKLRVDEVQGKNCLTNFHGLDFTSDKLRSLVRKWQTLIEANVTVKTTDDYLLRLFAIAFTKRRPNQIKKTTYAQSSQIRAIRKKMVEIIQREAGTRSLAQLTKLIPEVIGREIEKATHGIYPLQNVHIRKVKLLKSPKFDLGALLALHGESSTDDKGQKVEREFKETVLESV.

Over residues 1–18 the composition is skewed to basic residues; sequence MAVGKNKRLSKGKKGLKK. Residues 1 to 28 form a disordered region; the sequence is MAVGKNKRLSKGKKGLKKRTQDPFSRKD. Residue Ala2 is modified to N-acetylalanine; partial. Residues 19 to 28 show a composition bias toward basic and acidic residues; the sequence is RTQDPFSRKD.

Belongs to the eukaryotic ribosomal protein eS1 family. In terms of assembly, component of the small ribosomal subunit. Mature ribosomes consist of a small (40S) and a large (60S) subunit. The 40S subunit contains about 33 different proteins and 1 molecule of RNA (18S). The 60S subunit contains about 49 different proteins and 3 molecules of RNA (25S, 5.8S and 5S).

It is found in the cytoplasm. In Paracoccidioides lutzii (strain ATCC MYA-826 / Pb01) (Paracoccidioides brasiliensis), this protein is Small ribosomal subunit protein eS1.